The sequence spans 144 residues: Kunitz-type elastase inhibitor BrEI (144 aa).

A glycan (N-linked (GlcNAc...) asparagine) is linked at Asn-38. A disulfide bond links Cys-41 and Cys-88.

This sequence belongs to the leguminous Kunitz-type inhibitor family.

Functionally, inhibitor of porcine pancreatic elastase with a Ki of 27 nM. Does not inhibit human neutrophil elastase, bovine trypsin, human plasma kallikrein or porcine pancreatic kallikrein. The protein is Kunitz-type elastase inhibitor BrEI of Bauhinia rufa (Orchid tree).